A 72-amino-acid chain; its full sequence is Arrestin-E (72 aa).

It belongs to the arrestin family. As to expression, adrenal, cerebral cortex, heart, hypothalamus, intestine, liver, lung, pituitary, retina and testis.

The chain is Arrestin-E (Ear) from Rattus norvegicus (Rat).